The sequence spans 432 residues: Short/branched chain specific acyl-CoA dehydrogenase, mitochondrial (432 aa).

A mitochondrion-targeting transit peptide spans 1-33 (MEGLAVRLLRGSRLLRRNFPTCLSSWKIPPHVS). An N6-acetyllysine; alternate modification is found at lysine 70. Lysine 70 is modified (N6-succinyllysine; alternate). Residues 174-183 (FCLSEAGAGS) and 207-209 (WIS) each bind FAD. Serine 183 is a substrate binding site. Residue serine 183 is modified to Phosphoserine. Substrate contacts are provided by tyrosine 229 and tyrosine 283. Lysine 284 is subject to N6-acetyllysine; alternate. The residue at position 284 (lysine 284) is an N6-succinyllysine; alternate. Substrate is bound at residue 291–294 (NEGR). Residues arginine 319, glutamine 330, and 387-391 (EWMGG) contribute to the FAD site. The active-site Proton acceptor is the glutamate 414. 416-418 (ASN) is an FAD binding site. Lysine 426 carries the N6-acetyllysine modification.

This sequence belongs to the acyl-CoA dehydrogenase family. In terms of assembly, homotetramer. The cofactor is FAD.

The protein localises to the mitochondrion matrix. The enzyme catalyses 2-methylbutanoyl-CoA + oxidized [electron-transfer flavoprotein] + H(+) = (2E)-2-methylbut-2-enoyl-CoA + reduced [electron-transfer flavoprotein]. It catalyses the reaction (2S)-2-methylbutanoyl-CoA + oxidized [electron-transfer flavoprotein] + H(+) = (2E)-2-methylbut-2-enoyl-CoA + reduced [electron-transfer flavoprotein]. It carries out the reaction (2R)-2-methylbutanoyl-CoA + oxidized [electron-transfer flavoprotein] + H(+) = ethylacryloyl-CoA + reduced [electron-transfer flavoprotein]. The catalysed reaction is butanoyl-CoA + oxidized [electron-transfer flavoprotein] + H(+) = (2E)-butenoyl-CoA + reduced [electron-transfer flavoprotein]. The enzyme catalyses 2-methylpropanoyl-CoA + oxidized [electron-transfer flavoprotein] + H(+) = 2-methylpropenoyl-CoA + reduced [electron-transfer flavoprotein]. It catalyses the reaction hexanoyl-CoA + oxidized [electron-transfer flavoprotein] + H(+) = (2E)-hexenoyl-CoA + reduced [electron-transfer flavoprotein]. It carries out the reaction valproyl-CoA + oxidized [electron-transfer flavoprotein] + H(+) = (2E)-2-propylpent-2-enoyl-CoA + reduced [electron-transfer flavoprotein]. The protein operates within lipid metabolism; mitochondrial fatty acid beta-oxidation. Its pathway is amino-acid degradation; L-isoleucine degradation. In terms of biological role, short and branched chain specific acyl-CoA dehydrogenase that catalyzes the removal of one hydrogen from C-2 and C-3 of the fatty acyl-CoA thioester, resulting in the formation of trans-2-enoyl-CoA. Among the different mitochondrial acyl-CoA dehydrogenases, acts specifically on short and branched chain acyl-CoA derivatives such as (S)-2-methylbutyryl-CoA as well as short straight chain acyl-CoAs such as butyryl-CoA. Plays an important role in the metabolism of L-isoleucine by catalyzing the dehydrogenation of 2-methylbutyryl-CoA, one of the steps of the L-isoleucine catabolic pathway. Can also act on valproyl-CoA, a metabolite of the valproic acid drug. The chain is Short/branched chain specific acyl-CoA dehydrogenase, mitochondrial (ACADSB) from Pongo abelii (Sumatran orangutan).